Reading from the N-terminus, the 930-residue chain is Beta-mannosidase A (930 aa).

Residues 1 to 21 (MHVKAETVLALLTPGLPSVVG) form the signal peptide. Residues asparagine 62, asparagine 246, asparagine 281, asparagine 315, and asparagine 346 are each glycosylated (N-linked (GlcNAc...) asparagine). Glutamate 478 serves as the catalytic Proton donor. Residues asparagine 536, asparagine 607, asparagine 630, asparagine 657, asparagine 737, asparagine 760, asparagine 782, asparagine 789, asparagine 797, asparagine 823, and asparagine 909 are each glycosylated (N-linked (GlcNAc...) asparagine).

This sequence belongs to the glycosyl hydrolase 2 family. Beta-mannosidase A subfamily. As to quaternary structure, homodimer.

It is found in the secreted. It carries out the reaction Hydrolysis of terminal, non-reducing beta-D-mannose residues in beta-D-mannosides.. Its pathway is glycan metabolism; N-glycan degradation. Its function is as follows. Exoglycosidase that cleaves the single beta-linked mannose residue from the non-reducing end of beta-mannosidic oligosaccharides of various complexity and length. Involved in the degradation of polymeric mannan and galactomannan. This is Beta-mannosidase A (mndA) from Neosartorya fischeri (strain ATCC 1020 / DSM 3700 / CBS 544.65 / FGSC A1164 / JCM 1740 / NRRL 181 / WB 181) (Aspergillus fischerianus).